Reading from the N-terminus, the 445-residue chain is Questin oxidase (445 aa).

It belongs to the questin oxidase family. NADPH is required as a cofactor. As to expression, specifically expressed in conidia.

Its pathway is secondary metabolite biosynthesis. In terms of biological role, questin oxidase; part of the gene cluster that mediates the biosynthesis of trypacidin, a mycotoxin with antiprotozoal activity and that plays a role in the infection process. The pathway begins with the synthesis of atrochrysone thioester by the polyketide synthase (PKS) tpcC. The atrochrysone carboxyl ACP thioesterase tpcB then breaks the thioester bond and releases the atrochrysone carboxylic acid from tpcC. The decarboxylase tpcK converts atrochrysone carboxylic acid to atrochrysone which is further reduced into emodin anthrone. The next step is performed by the emodin anthrone oxygenase tpcL that catalyzes the oxidation of emodinanthrone to emodin. Emodin O-methyltransferase encoded by tpcA catalyzes methylation of the 8-hydroxy group of emodin to form questin. Ring cleavage of questin by questin oxidase tpcI leads to desmethylsulochrin via several intermediates including questin epoxide. Another methylation step catalyzed by tpcM leads to the formation of sulochrin which is further converted to monomethylsulfochrin by tpcH. Finally, the tpcJ catalyzes the conversion of monomethylsulfochrin to trypacidin. Trypacidin is toxic for human pulmonary and bronchial epithelial cells by initiating the intracellular formation of nitric oxide (NO) and hydrogen peroxide (H(2)O(2)), thus triggering host necrotic cell death. The trypacidin pathway is also able to produce endocrocin via a distinct route from the endocrocin Enc pathway. This chain is Questin oxidase, found in Aspergillus fumigatus (strain ATCC MYA-4609 / CBS 101355 / FGSC A1100 / Af293) (Neosartorya fumigata).